A 551-amino-acid chain; its full sequence is 2,3-bisphosphoglycerate-independent phosphoglycerate mutase (551 aa).

The Mn(2+) site is built by Asp-22 and Ser-74. Residue Ser-74 is the Phosphoserine intermediate of the active site. Substrate is bound by residues His-135, 165-166, Arg-201, Arg-208, and 281-284; these read RD and RGDR. Asp-319 is a Mn(2+) binding site. A substrate-binding site is contributed by Lys-356. Residues Asp-424, His-428, Asp-465, His-466, and His-495 each coordinate Mn(2+).

It belongs to the BPG-independent phosphoglycerate mutase family. As to quaternary structure, monomer. It depends on Mn(2+) as a cofactor.

The protein localises to the cytoplasm. The enzyme catalyses (2R)-2-phosphoglycerate = (2R)-3-phosphoglycerate. The protein operates within carbohydrate degradation; glycolysis; pyruvate from D-glyceraldehyde 3-phosphate: step 3/5. Catalyzes the interconversion of 2-phosphoglycerate (2-PGA) and 3-phosphoglycerate (3-PGA). This chain is 2,3-bisphosphoglycerate-independent phosphoglycerate mutase, found in Trypanosoma brucei brucei (strain 927/4 GUTat10.1).